Consider the following 109-residue polypeptide: DNA-directed RNA polymerase subunit I (109 aa).

The enzyme catalyses RNA(n) + a ribonucleoside 5'-triphosphate = RNA(n+1) + diphosphate. In terms of biological role, DNA-dependent RNA polymerase catalyzes the transcription of DNA into RNA using the four ribonucleoside triphosphates as substrates. This is DNA-directed RNA polymerase subunit I (rpoI) from Methanocaldococcus jannaschii (strain ATCC 43067 / DSM 2661 / JAL-1 / JCM 10045 / NBRC 100440) (Methanococcus jannaschii).